The sequence spans 252 residues: Aspartate/glutamate leucyltransferase (252 aa).

This sequence belongs to the R-transferase family. Bpt subfamily.

It is found in the cytoplasm. It carries out the reaction N-terminal L-glutamyl-[protein] + L-leucyl-tRNA(Leu) = N-terminal L-leucyl-L-glutamyl-[protein] + tRNA(Leu) + H(+). The catalysed reaction is N-terminal L-aspartyl-[protein] + L-leucyl-tRNA(Leu) = N-terminal L-leucyl-L-aspartyl-[protein] + tRNA(Leu) + H(+). Its function is as follows. Functions in the N-end rule pathway of protein degradation where it conjugates Leu from its aminoacyl-tRNA to the N-termini of proteins containing an N-terminal aspartate or glutamate. The chain is Aspartate/glutamate leucyltransferase from Polynucleobacter necessarius subsp. necessarius (strain STIR1).